Reading from the N-terminus, the 457-residue chain is Acetylcholine receptor subunit alpha (457 aa).

The signal sequence occupies residues 1–20; it reads MELSTVLLLLGLCSAGLVLG. The Extracellular segment spans residues 21–230; sequence SEHETRLVAK…ITYHFVMQRL (210 aa). 2 disulfide bridges follow: cysteine 148–cysteine 162 and cysteine 212–cysteine 213. N-linked (GlcNAc...) asparagine glycosylation is present at asparagine 161. The next 3 helical transmembrane spans lie at 231-255, 263-281, and 297-316; these read PLYFIVNVIIPCLLFSFLTSLVFYL, MTLSISVLLSLTVFLLVIV, and YMLFTMVFVIASIIITVIVI. The Cytoplasmic portion of the chain corresponds to 317-428; sequence NTHHRSPSTH…WKYVAMVMDH (112 aa). Residues 429–447 form a helical membrane-spanning segment; it reads ILLGVFMLVCLIGTLAVFA.

This sequence belongs to the ligand-gated ion channel (TC 1.A.9) family. Acetylcholine receptor (TC 1.A.9.1) subfamily. Alpha-1/CHRNA1 sub-subfamily. As to quaternary structure, one of the alpha chains that assemble within the acetylcholine receptor, a pentamer of two alpha chains, a beta, a delta, and a gamma (in immature muscle) or epsilon (in mature muscle) chains. The muscle heteropentamer composed of alpha-1, beta-1, delta, epsilon subunits interacts with the alpha-conotoxin ImII.

It is found in the postsynaptic cell membrane. Its subcellular location is the cell membrane. It carries out the reaction K(+)(in) = K(+)(out). The enzyme catalyses Na(+)(in) = Na(+)(out). Functionally, upon acetylcholine binding, the AChR responds by an extensive change in conformation that affects all subunits and leads to opening of an ion-conducting channel across the plasma membrane. The chain is Acetylcholine receptor subunit alpha (Chrna1) from Mus musculus (Mouse).